The sequence spans 630 residues: Probable potassium transport system protein Kup 2 (630 aa).

12 helical membrane passes run 17-37 (FWAL…TSPL), 56-76 (VIVL…VTAK), 108-128 (VFLM…SMIT), 145-165 (PALE…LFAF), 176-196 (AFGP…LIHI), 214-234 (FMLS…LAVT), 255-275 (WLFF…ALVL), 293-313 (FLVP…QAVI), 345-365 (IYLP…VLLF), 375-395 (YGIA…VVIW), 402-422 (PAAA…FFSA), and 427-447 (LLEG…LIWV).

Belongs to the HAK/KUP transporter (TC 2.A.72) family.

It is found in the cell inner membrane. The catalysed reaction is K(+)(in) + H(+)(in) = K(+)(out) + H(+)(out). Functionally, transport of potassium into the cell. Likely operates as a K(+):H(+) symporter. The sequence is that of Probable potassium transport system protein Kup 2 from Rhodopseudomonas palustris (strain BisB18).